A 154-amino-acid polypeptide reads, in one-letter code: Peptide deformylase (154 aa).

Fe cation is bound by residues Cys-90 and His-132. Glu-133 is an active-site residue. His-136 is a binding site for Fe cation.

It belongs to the polypeptide deformylase family. Requires Fe(2+) as cofactor.

It carries out the reaction N-terminal N-formyl-L-methionyl-[peptide] + H2O = N-terminal L-methionyl-[peptide] + formate. In terms of biological role, removes the formyl group from the N-terminal Met of newly synthesized proteins. Requires at least a dipeptide for an efficient rate of reaction. N-terminal L-methionine is a prerequisite for activity but the enzyme has broad specificity at other positions. The polypeptide is Peptide deformylase (Desulforudis audaxviator (strain MP104C)).